A 141-amino-acid polypeptide reads, in one-letter code: Lutropin subunit beta (141 aa).

The N-terminal stretch at 1–20 (MEMLQGLLLLMLLSMGGTWA) is a signal peptide. 6 disulfides stabilise this stretch: Cys-29–Cys-77, Cys-43–Cys-92, Cys-46–Cys-130, Cys-54–Cys-108, Cys-58–Cys-110, and Cys-113–Cys-120. N-linked (GlcNAc...) asparagine glycans are attached at residues Asn-33 and Asn-50.

Belongs to the glycoprotein hormones subunit beta family. In terms of assembly, heterodimer of a common alpha chain and a unique beta chain which confers biological specificity to thyrotropin, lutropin, follitropin and gonadotropin.

The protein resides in the secreted. Functionally, promotes spermatogenesis and ovulation by stimulating the testes and ovaries to synthesize steroids. This chain is Lutropin subunit beta (LHB), found in Pongo pygmaeus (Bornean orangutan).